We begin with the raw amino-acid sequence, 395 residues long: S-adenosylmethionine synthase (395 aa).

His-15 lines the ATP pocket. Asp-17 provides a ligand contact to Mg(2+). Glu-43 contributes to the K(+) binding site. Gln-99 serves as a coordination point for L-methionine. The interval Gln-99 to Glu-109 is flexible loop. ATP-binding positions include Asp-174 to Lys-176, Arg-240 to Phe-241, Asp-249, Arg-255 to Lys-256, Ala-272, and Lys-276. Asp-249 provides a ligand contact to L-methionine. Lys-280 serves as a coordination point for L-methionine.

Belongs to the AdoMet synthase family. In terms of assembly, homotetramer; dimer of dimers. Requires Mg(2+) as cofactor. The cofactor is K(+).

Its subcellular location is the cytoplasm. The enzyme catalyses L-methionine + ATP + H2O = S-adenosyl-L-methionine + phosphate + diphosphate. It participates in amino-acid biosynthesis; S-adenosyl-L-methionine biosynthesis; S-adenosyl-L-methionine from L-methionine: step 1/1. In terms of biological role, catalyzes the formation of S-adenosylmethionine (AdoMet) from methionine and ATP. The overall synthetic reaction is composed of two sequential steps, AdoMet formation and the subsequent tripolyphosphate hydrolysis which occurs prior to release of AdoMet from the enzyme. The sequence is that of S-adenosylmethionine synthase from Moorella thermoacetica (strain ATCC 39073 / JCM 9320).